The primary structure comprises 297 residues: Protein-L-isoaspartate O-methyltransferase (297 aa).

Residues 20-57 form a disordered region; that stretch reads RKPAPARTAGMPAVGAPGPAQAQAKARDKQPSAPTAAA. A compositionally biased stretch (low complexity) spans 28-43; it reads AGMPAVGAPGPAQAQA. Ser-133 is an active-site residue.

This sequence belongs to the methyltransferase superfamily. L-isoaspartyl/D-aspartyl protein methyltransferase family.

It is found in the cytoplasm. The enzyme catalyses [protein]-L-isoaspartate + S-adenosyl-L-methionine = [protein]-L-isoaspartate alpha-methyl ester + S-adenosyl-L-homocysteine. Its function is as follows. Catalyzes the methyl esterification of L-isoaspartyl residues in peptides and proteins that result from spontaneous decomposition of normal L-aspartyl and L-asparaginyl residues. It plays a role in the repair and/or degradation of damaged proteins. This chain is Protein-L-isoaspartate O-methyltransferase, found in Cupriavidus pinatubonensis (strain JMP 134 / LMG 1197) (Cupriavidus necator (strain JMP 134)).